Consider the following 261-residue polypeptide: Uridine-cytidine kinase 2 (261 aa).

Residues M1 to N16 show a composition bias toward polar residues. The tract at residues M1–G24 is disordered. A2 bears the N-acetylalanine mark. G27–S35 is a binding site for ATP. Substrate-binding residues include D84, Y112, H117, R166, R176, and Q184. Position 213 (D213) interacts with ATP. The interval R236–H261 is disordered. S254 carries the phosphoserine modification.

It belongs to the uridine kinase family. In terms of assembly, homotetramer. As to expression, according to PubMed:8812458; testis-specific. According to PubMed:11306702, placenta-specific.

It carries out the reaction uridine + ATP = UMP + ADP + H(+). The catalysed reaction is cytidine + ATP = CMP + ADP + H(+). It participates in pyrimidine metabolism; CTP biosynthesis via salvage pathway; CTP from cytidine: step 1/3. Its pathway is pyrimidine metabolism; UMP biosynthesis via salvage pathway; UMP from uridine: step 1/1. Functionally, phosphorylates uridine and cytidine to uridine monophosphate and cytidine monophosphate. Does not phosphorylate deoxyribonucleosides or purine ribonucleosides. Can use ATP or GTP as a phosphate donor. Can also phosphorylate cytidine and uridine nucleoside analogs such as 6-azauridine, 5-fluorouridine, 4-thiouridine, 5-bromouridine, N(4)-acetylcytidine, N(4)-benzoylcytidine, 5-fluorocytidine, 2-thiocytidine, 5-methylcytidine, and N(4)-anisoylcytidine. In Homo sapiens (Human), this protein is Uridine-cytidine kinase 2 (UCK2).